We begin with the raw amino-acid sequence, 968 residues long: RNA polymerase-associated protein RapA (968 aa).

One can recognise a Helicase ATP-binding domain in the interval 164–334 (DVGRRHAPRV…FARLRLLDPN (171 aa)). 177-184 (DEVGLGKT) contributes to the ATP binding site. Residues 280–283 (DEAH) carry the DEAH box motif. The Helicase C-terminal domain maps to 490–644 (RVEWLMGYLT…TCPTGRTVYD (155 aa)).

It belongs to the SNF2/RAD54 helicase family. RapA subfamily. Interacts with the RNAP. Has a higher affinity for the core RNAP than for the holoenzyme. Its ATPase activity is stimulated by binding to RNAP.

Its function is as follows. Transcription regulator that activates transcription by stimulating RNA polymerase (RNAP) recycling in case of stress conditions such as supercoiled DNA or high salt concentrations. Probably acts by releasing the RNAP, when it is trapped or immobilized on tightly supercoiled DNA. Does not activate transcription on linear DNA. Probably not involved in DNA repair. The chain is RNA polymerase-associated protein RapA from Klebsiella pneumoniae (strain 342).